The sequence spans 245 residues: Glutathione S-transferase T1 (245 aa).

The 82-residue stretch at methionine 2–alanine 83 folds into the GST N-terminal domain. Glutathione is bound by residues serine 12–glutamine 13, glutamine 41–leucine 42, lysine 54–valine 55, and glutamate 67–serine 68. Residues aspartate 90 to methionine 233 form the GST C-terminal domain. Residues serine 243–isoleucine 245 carry the Microbody targeting signal motif.

Belongs to the GST superfamily. Theta family.

It localises to the nucleus. The protein localises to the peroxisome. It carries out the reaction RX + glutathione = an S-substituted glutathione + a halide anion + H(+). Its function is as follows. In vitro, possesses glutathione S-transferase activity toward 1-chloro-2,4-dinitrobenzene (CDNB) and p-nitrobenzyl chloride (pNBC), and glutathione peroxidase activity toward cumene hydroperoxide and linoleic acid-13-hydroperoxide. May be involved in the conjugation of reduced glutathione to a wide number of exogenous and endogenous hydrophobic electrophiles and have a detoxification role against certain herbicides. This chain is Glutathione S-transferase T1 (GSTT1), found in Arabidopsis thaliana (Mouse-ear cress).